Reading from the N-terminus, the 311-residue chain is Homoserine kinase (311 aa).

96 to 106 contacts ATP; sequence PLARGLGSSAA.

Belongs to the GHMP kinase family. Homoserine kinase subfamily.

It localises to the cytoplasm. The enzyme catalyses L-homoserine + ATP = O-phospho-L-homoserine + ADP + H(+). It participates in amino-acid biosynthesis; L-threonine biosynthesis; L-threonine from L-aspartate: step 4/5. Catalyzes the ATP-dependent phosphorylation of L-homoserine to L-homoserine phosphate. This Natranaerobius thermophilus (strain ATCC BAA-1301 / DSM 18059 / JW/NM-WN-LF) protein is Homoserine kinase.